A 397-amino-acid polypeptide reads, in one-letter code: Lipoyl synthase 2, chloroplastic (397 aa).

The N-terminal 35 residues, 1-35, are a transit peptide targeting the chloroplast; that stretch reads MIEQSLSKPSFSLSIPIPKAPKSKSSFFCSYSKIR. The disordered stretch occupies residues 49–85; sequence AKHPQNSTTINNGSSSSASVDLKNNEKGPYPYPGGGK. Over residues 54 to 67 the composition is skewed to low complexity; that stretch reads NSTTINNGSSSSAS. [4Fe-4S] cluster contacts are provided by C128, C133, C139, C159, C163, C166, and S374. Residues 142 to 363 form the Radical SAM core domain; the sequence is GGGDGIATAT…KEYGESIGFR (222 aa).

This sequence belongs to the radical SAM superfamily. Lipoyl synthase family. The cofactor is [4Fe-4S] cluster.

Its subcellular location is the plastid. It localises to the chloroplast. The catalysed reaction is [[Fe-S] cluster scaffold protein carrying a second [4Fe-4S](2+) cluster] + N(6)-octanoyl-L-lysyl-[protein] + 2 oxidized [2Fe-2S]-[ferredoxin] + 2 S-adenosyl-L-methionine + 4 H(+) = [[Fe-S] cluster scaffold protein] + N(6)-[(R)-dihydrolipoyl]-L-lysyl-[protein] + 4 Fe(3+) + 2 hydrogen sulfide + 2 5'-deoxyadenosine + 2 L-methionine + 2 reduced [2Fe-2S]-[ferredoxin]. The protein operates within protein modification; protein lipoylation via endogenous pathway; protein N(6)-(lipoyl)lysine from octanoyl-[acyl-carrier-protein]: step 2/2. Functionally, catalyzes the radical-mediated insertion of two sulfur atoms into the C-6 and C-8 positions of the octanoyl moiety bound to the lipoyl domains of lipoate-dependent enzymes, thereby converting the octanoylated domains into lipoylated derivatives. This chain is Lipoyl synthase 2, chloroplastic, found in Populus trichocarpa (Western balsam poplar).